The primary structure comprises 179 residues: Large ribosomal subunit protein uL6 (179 aa).

Belongs to the universal ribosomal protein uL6 family. Part of the 50S ribosomal subunit.

This protein binds to the 23S rRNA, and is important in its secondary structure. It is located near the subunit interface in the base of the L7/L12 stalk, and near the tRNA binding site of the peptidyltransferase center. This Chlorobaculum tepidum (strain ATCC 49652 / DSM 12025 / NBRC 103806 / TLS) (Chlorobium tepidum) protein is Large ribosomal subunit protein uL6.